A 361-amino-acid polypeptide reads, in one-letter code: G-protein coupled receptor 68 (361 aa).

Over 1-12 (MGNITADNTSMN) the chain is Extracellular. Asn-3 and Asn-8 each carry an N-linked (GlcNAc...) asparagine glycan. The helical transmembrane segment at 13 to 49 (CDIDHTIHQTLAPVVYVMVLVVGFPANCLSLYYGYLQ) threads the bilayer. 2 disulfides stabilise this stretch: Cys-13/Cys-258 and Cys-94/Cys-172. The Cytoplasmic portion of the chain corresponds to 50-53 (IKAR). Residues 54–84 (NELGVYLCNLTVADLFYICSLPFWLQYVLQH) form a helical membrane-spanning segment. The Extracellular segment spans residues 85–89 (DHWSH). A helical transmembrane segment spans residues 90-125 (DDLSCQVCGILLYENIYISVGFLCCISIDRYLAVAH). Residues 126–133 (PFRFHQFR) lie on the Cytoplasmic side of the membrane. A helical transmembrane segment spans residues 134 to 160 (TLKAAMGVSALIWVKELLTSIYFLMHE). At 161 to 176 (EVVEDADRHRVCFEHY) the chain is on the extracellular side. Residues 161–176 (EVVEDADRHRVCFEHY) are extracellular loop 2 (ECL2). The chain crosses the membrane as a helical span at residues 177-214 (PLEPRQRGINYYRFLVGFLFPICLLLASYRGILRAVRR). Topologically, residues 215-218 (SHGT) are cytoplasmic. A helical transmembrane segment spans residues 219–254 (QKSRKDQIQRLVLSTVVIFLACFLPYHVLLLVRSLW). The Extracellular portion of the chain corresponds to 255 to 260 (ESSCDF). The helical transmembrane segment at 261–289 (AKGIFNAYHFSLLLTSFNCVADPVLYCFV) threads the bilayer. The Cytoplasmic segment spans residues 290 to 361 (SETTHRDLAR…MGGSPAGGLS (72 aa)). A disordered region spans residues 340 to 361 (LHPAFQTPHPPGMGGSPAGGLS). Over residues 351-361 (GMGGSPAGGLS) the composition is skewed to gly residues.

The protein belongs to the G-protein coupled receptor 1 family.

It localises to the cell membrane. With respect to regulation, activated by a network of residues that connects an extracellular-facing cavity to Glu-149, a conserved charged residue buried in the transmembrane core of the receptor. Protonation likely drives conformational changes in extracellular loop 2 (ECL2), which stabilizes movement of transmembrane 3 (TM3) and a series of rearrangements that connect the extracellular-facing cavity to Glu-149, a residue only conserved in proton-sensing G-protein coupled receptors. Activated in an allosteric manner by divalent metal ions at the extracellular surface following the order: Cd(2+) &gt; Co(2+) &gt; Ni(2+) &gt; Zn(2+) &gt; Fe(2+) &gt; Ca(2+) &gt; Mg(2+). Its function is as follows. Proton-sensing G-protein coupled receptor activated by extracellular pH, which is required to monitor pH changes and generate adaptive reactions. The receptor is almost silent at pH 7.8 but fully activated at pH 6.8. Ligand binding causes a conformation change that triggers signaling via guanine nucleotide-binding proteins (G proteins) and modulates the activity of downstream effectors, such as phospholipase C. GPR68 is mainly coupled to G(q) G proteins and mediates production of diacylglycerol (DAG) and inositol 1,4,5-trisphosphate (IP3). Acts as a key mechanosensor of fluid shear stress and membrane stretch. Expressed in endothelial cells of small-diameter resistance arteries, where it mediates flow-induced dilation in response to shear stress. May represents an osteoblastic pH sensor regulating cell-mediated responses to acidosis in bone. Acts as a regulator of calcium-sensing receptor CASR in a seesaw manner: GPR68-mediated signaling inhibits CASR signaling in response to protons, while CASR inhibits GPR68 in presence of extracellular calcium. In Bos taurus (Bovine), this protein is G-protein coupled receptor 68 (GPR68).